We begin with the raw amino-acid sequence, 337 residues long: Phosphate acyltransferase (337 aa).

This sequence belongs to the PlsX family. In terms of assembly, homodimer. Probably interacts with PlsY.

Its subcellular location is the cytoplasm. The enzyme catalyses a fatty acyl-[ACP] + phosphate = an acyl phosphate + holo-[ACP]. It functions in the pathway lipid metabolism; phospholipid metabolism. Its function is as follows. Catalyzes the reversible formation of acyl-phosphate (acyl-PO(4)) from acyl-[acyl-carrier-protein] (acyl-ACP). This enzyme utilizes acyl-ACP as fatty acyl donor, but not acyl-CoA. This Hydrogenovibrio crunogenus (strain DSM 25203 / XCL-2) (Thiomicrospira crunogena) protein is Phosphate acyltransferase.